The following is an 89-amino-acid chain: Large ribosomal subunit protein bL27 (89 aa).

Residues 1–21 (MAHKKAGGSSRNGRDSESKRL) form a disordered region.

The protein belongs to the bacterial ribosomal protein bL27 family.

The sequence is that of Large ribosomal subunit protein bL27 from Chelativorans sp. (strain BNC1).